Reading from the N-terminus, the 225-residue chain is UPF0700 transmembrane protein YoaK (225 aa).

The next 6 membrane-spanning stretches (helical) occupy residues 10–30, 56–76, 99–119, 137–157, 174–194, and 197–217; these read LLSL…LSLG, VFNS…ATLM, ILFV…HILI, GIAG…LEDI, TVLR…VALA, and DFYH…MMTA.

Belongs to the UPF0700 family.

It localises to the cell membrane. This chain is UPF0700 transmembrane protein YoaK (yoaK), found in Bacillus subtilis (strain 168).